The sequence spans 233 residues: Large ribosomal subunit protein uL1 (233 aa).

The protein belongs to the universal ribosomal protein uL1 family. As to quaternary structure, part of the 50S ribosomal subunit.

Binds directly to 23S rRNA. The L1 stalk is quite mobile in the ribosome, and is involved in E site tRNA release. In terms of biological role, protein L1 is also a translational repressor protein, it controls the translation of the L11 operon by binding to its mRNA. The sequence is that of Large ribosomal subunit protein uL1 from Shewanella loihica (strain ATCC BAA-1088 / PV-4).